The chain runs to 202 residues: Probable nicotinate-nucleotide adenylyltransferase (202 aa).

It belongs to the NadD family.

It carries out the reaction nicotinate beta-D-ribonucleotide + ATP + H(+) = deamido-NAD(+) + diphosphate. Its pathway is cofactor biosynthesis; NAD(+) biosynthesis; deamido-NAD(+) from nicotinate D-ribonucleotide: step 1/1. Its function is as follows. Catalyzes the reversible adenylation of nicotinate mononucleotide (NaMN) to nicotinic acid adenine dinucleotide (NaAD). This Clostridium perfringens (strain 13 / Type A) protein is Probable nicotinate-nucleotide adenylyltransferase.